The following is an 83-amino-acid chain: Omega-agatoxin-Aa4b (83 aa).

Positions 1-20 are cleaved as a signal peptide; the sequence is MKLCMTLLITAIAVVTFVVA. Residues 21–35 constitute a propeptide that is removed on maturation; sequence TQEESAEFNEVEESR. Disulfide bonds link Cys-39–Cys-55, Cys-47–Cys-60, Cys-54–Cys-71, and Cys-62–Cys-69. Ser-81 bears the D-serine (Ser) mark.

Belongs to the neurotoxin 02 (plectoxin) family. 03 (omega-agtx) subfamily. Post-translationally, the toxin with D-Ser (named omega-aga IVC) is 80-90 fold more potent than that with L-Ser (omega-aga IVB) against Cav2.1/CACNA1A (P-type) channels in rat cerebellar Purkinje neurons and is more resistant to proteases. The epimerization is done by the venom peptide isomerase heterodimer. Expressed by the venom gland.

The protein localises to the secreted. Antagonist of voltage-gated Cav2.1/CACNA1A (P-type) calcium channels. Paralyzes insect by blocking neuromuscular transmission. This is Omega-agatoxin-Aa4b from Agelenopsis aperta (North American funnel-web spider).